The primary structure comprises 505 residues: Glycerol kinase (505 aa).

Thr-15 lines the ADP pocket. Thr-15, Thr-16, and Ser-17 together coordinate ATP. Thr-15 is a binding site for sn-glycerol 3-phosphate. Arg-19 is a binding site for ADP. Sn-glycerol 3-phosphate contacts are provided by Arg-85, Glu-86, Tyr-136, and Asp-249. Glycerol contacts are provided by Arg-85, Glu-86, Tyr-136, Asp-249, and Gln-250. Residues Thr-271 and Gly-314 each contribute to the ADP site. Thr-271, Gly-314, Gln-318, and Gly-415 together coordinate ATP. Positions 415 and 419 each coordinate ADP.

It belongs to the FGGY kinase family.

It catalyses the reaction glycerol + ATP = sn-glycerol 3-phosphate + ADP + H(+). It functions in the pathway polyol metabolism; glycerol degradation via glycerol kinase pathway; sn-glycerol 3-phosphate from glycerol: step 1/1. Inhibited by fructose 1,6-bisphosphate (FBP). Functionally, key enzyme in the regulation of glycerol uptake and metabolism. Catalyzes the phosphorylation of glycerol to yield sn-glycerol 3-phosphate. The protein is Glycerol kinase of Mycoplasma capricolum subsp. capricolum (strain California kid / ATCC 27343 / NCTC 10154).